The primary structure comprises 62 residues: Histone H1.2, embryonic (62 aa).

An H15 domain is found at 1 to 53; sequence HVVAAITALKERGGSSMKKQSVFIKKALKSGVEKGTLVQVKGKGASGSFKLGK.

This sequence belongs to the histone H1/H5 family.

The protein resides in the nucleus. It is found in the chromosome. Histones H1 are necessary for the condensation of nucleosome chains into higher-order structures. This Parechinus angulosus (Angulate sea urchin) protein is Histone H1.2, embryonic.